The chain runs to 259 residues: PKHD-type hydroxylase PsycPRwf_1523 (259 aa).

The Fe2OG dioxygenase domain maps to 80 to 180 (VIMPPLFSAY…RLAMVTWVQS (101 aa)). The Fe cation site is built by His98, Asp100, and His161. Arg171 provides a ligand contact to 2-oxoglutarate.

The cofactor is Fe(2+). Requires L-ascorbate as cofactor.

The sequence is that of PKHD-type hydroxylase PsycPRwf_1523 from Psychrobacter sp. (strain PRwf-1).